Consider the following 121-residue polypeptide: Somatostatin-1 (121 aa).

An N-terminal signal peptide occupies residues 1-24 (MKMVSSSRLRCLLVLLLSLTASIS). Positions 25 to 105 (CSFAGQRDSK…SGGPLLAPRE (81 aa)) are excised as a propeptide. The interval 76 to 99 (NFPLAEGGPEDAHADLERAASGGP) is disordered. A disulfide bridge links Cys110 with Cys121.

It belongs to the somatostatin family.

The protein localises to the secreted. Somatostatin inhibits the release of somatotropin. The sequence is that of Somatostatin-1 (sst1) from Lophius americanus (American angler).